Reading from the N-terminus, the 268-residue chain is Purine nucleoside phosphorylase (268 aa).

Phosphate-binding positions include Ser36, His68, 88-90 (RIH), and Ala120. Glu189 lines the a purine D-ribonucleoside pocket. Ser208 contacts phosphate. An a purine D-ribonucleoside-binding site is contributed by Asn231.

It belongs to the PNP/MTAP phosphorylase family. As to quaternary structure, homotrimer.

It carries out the reaction a purine 2'-deoxy-D-ribonucleoside + phosphate = a purine nucleobase + 2-deoxy-alpha-D-ribose 1-phosphate. It participates in purine metabolism; purine nucleoside salvage. Functionally, the purine nucleoside phosphorylases catalyze the phosphorolytic breakdown of the N-glycosidic bond in the beta-(deoxy)ribonucleoside molecules, with the formation of the corresponding free purine bases and pentose-1-phosphate. Cleaves guanosine, inosine, 2'-deoxyguanosine and 2'-deoxyinosine. The sequence is that of Purine nucleoside phosphorylase (punA) from Mycobacterium bovis (strain ATCC BAA-935 / AF2122/97).